The sequence spans 155 residues: MSAKDPSRGLLVSPIKNGTVIDHITAGEALNVLRILGITGSTRECLSIATNVESKRMGKKDIVKIENRELRTEEVDRIALLAPQAKINIIRNYKVVEKKGVEIPEVIRGVVRCPNPGCITNTDEPVASTFEVLDKGLHCLYCDWLIKDDIANHII.

Residues Cys-113, Cys-118, Cys-139, and Cys-142 each coordinate Zn(2+).

This sequence belongs to the PyrI family. In terms of assembly, contains catalytic and regulatory chains. Zn(2+) serves as cofactor.

Functionally, involved in allosteric regulation of aspartate carbamoyltransferase. In Methanoculleus marisnigri (strain ATCC 35101 / DSM 1498 / JR1), this protein is Aspartate carbamoyltransferase regulatory chain.